We begin with the raw amino-acid sequence, 343 residues long: Anthranilate phosphoribosyltransferase (343 aa).

5-phospho-alpha-D-ribose 1-diphosphate-binding positions include glycine 78, 81–82 (GD), threonine 86, 88–91 (NIST), 106–114 (KHGNRSVSS), and serine 118. Residue glycine 78 coordinates anthranilate. Serine 90 contributes to the Mg(2+) binding site. Asparagine 109 is an anthranilate binding site. Arginine 164 contributes to the anthranilate binding site. Residues aspartate 223 and glutamate 224 each contribute to the Mg(2+) site.

The protein belongs to the anthranilate phosphoribosyltransferase family. Homodimer. Mg(2+) is required as a cofactor.

The catalysed reaction is N-(5-phospho-beta-D-ribosyl)anthranilate + diphosphate = 5-phospho-alpha-D-ribose 1-diphosphate + anthranilate. It functions in the pathway amino-acid biosynthesis; L-tryptophan biosynthesis; L-tryptophan from chorismate: step 2/5. In terms of biological role, catalyzes the transfer of the phosphoribosyl group of 5-phosphorylribose-1-pyrophosphate (PRPP) to anthranilate to yield N-(5'-phosphoribosyl)-anthranilate (PRA). The protein is Anthranilate phosphoribosyltransferase of Chlamydia felis (strain Fe/C-56) (Chlamydophila felis).